A 448-amino-acid polypeptide reads, in one-letter code: Protein ECM7 (448 aa).

At 1 to 28 the chain is on the cytoplasmic side; the sequence is MVMSRIRDTIARPFQNLTALEKVVQWLR. A helical transmembrane segment spans residues 29–49; the sequence is LGTTLLIISFGLALTVGPLSS. The Extracellular portion of the chain corresponds to 50-204; it reads PRTLYMSRLD…MRSLKHKKAN (155 aa). The helical transmembrane segment at 205–225 threads the bilayer; sequence VLHLLYAVISFQVCMLFFMIW. Topologically, residues 226–246 are cytoplasmic; sequence YYYIKGRFMNALKERALVHIN. A helical membrane pass occupies residues 247-267; that stretch reads SLLSLVVFIGGLISSISLAWV. Over 268–287 the chain is Extracellular; the sequence is NYTIQSRINTELEAFGFSYH. Residues 288-308 traverse the membrane as a helical segment; sequence LGVTWFALLWCFAGLISVSCL. Residues 309–448 lie on the Cytoplasmic side of the membrane; it reads AWSGLEWCIS…VIKPSSALQF (140 aa). 2 stretches are compositionally biased toward polar residues: residues 351-363 and 383-406; these read YSQRYPQRQSTSG and VDLNSENDANTSLDHGNPTANISN. 2 disordered regions span residues 351 to 411 and 427 to 448; these read YSQR…GKHE and RSSNDSEESMQRVIKPSSALQF.

It is found in the membrane. Functionally, may be involved in cell wall organization and biogenesis. The chain is Protein ECM7 (ECM7) from Saccharomyces cerevisiae (strain ATCC 204508 / S288c) (Baker's yeast).